The primary structure comprises 260 residues: MPVDLLADLTAGALEDAARRRADRPLSAVEAVAAAQAPPLPALDALAPADRVKVIAEVKRASPSRGDLAEIPDPAALARLYETGGASAISVLTEERRFRGSLADLESVRAAVSLPVLRKEFIADPYQVFEARAAGADLVLLIVAALEQRRLAELHDLIVELGMTPLVEAHTADELSRAFDTGAKLVGVNARDLSTFELDRNLFGRLAERYPSDVIRVAESAVKSAADVAHYRAAGAHVVLVGEALVTSDPVATLSEFRGV.

Belongs to the TrpC family.

The enzyme catalyses 1-(2-carboxyphenylamino)-1-deoxy-D-ribulose 5-phosphate + H(+) = (1S,2R)-1-C-(indol-3-yl)glycerol 3-phosphate + CO2 + H2O. Its pathway is amino-acid biosynthesis; L-tryptophan biosynthesis; L-tryptophan from chorismate: step 4/5. This is Indole-3-glycerol phosphate synthase from Leifsonia xyli subsp. xyli (strain CTCB07).